Reading from the N-terminus, the 159-residue chain is Anaerobic nitrite reductase HB2 (159 aa).

Residues 2–152 (GFTEKQEGLV…LAEAIKAEMK (151 aa)) enclose the Globin domain. A Homodimerization motif is present at residues 35–39 (EIAPG). Heme b is bound by residues S45, K59, H63, and H98. The Homodimerization signature appears at 105–117 (DPHFEVVKEALLR).

This sequence belongs to the plant globin family. As to quaternary structure, homodimer. Heme b is required as a cofactor.

Its subcellular location is the cytoplasm. The protein localises to the nucleus. The catalysed reaction is Fe(III)-heme b-[protein] + nitric oxide + H2O = Fe(II)-heme b-[protein] + nitrite + 2 H(+). Phytoglobin that reduces nitrite to nitric oxide (NO) under anoxic conditions (e.g. during flooding or in waterlogged soil). May not function as an oxygen storage or transport protein. Has an unusually high affinity for O(2) through an hexacoordinate heme iron because of a very low dissociation constant. This Gossypium hirsutum (Upland cotton) protein is Anaerobic nitrite reductase HB2.